We begin with the raw amino-acid sequence, 158 residues long: SsrA-binding protein (158 aa).

Positions 133 to 152 (KRQTLREQQDNREAQREMRE) are enriched in basic and acidic residues. A disordered region spans residues 133 to 158 (KRQTLREQQDNREAQREMRERNRRRG).

The protein belongs to the SmpB family.

The protein resides in the cytoplasm. Functionally, required for rescue of stalled ribosomes mediated by trans-translation. Binds to transfer-messenger RNA (tmRNA), required for stable association of tmRNA with ribosomes. tmRNA and SmpB together mimic tRNA shape, replacing the anticodon stem-loop with SmpB. tmRNA is encoded by the ssrA gene; the 2 termini fold to resemble tRNA(Ala) and it encodes a 'tag peptide', a short internal open reading frame. During trans-translation Ala-aminoacylated tmRNA acts like a tRNA, entering the A-site of stalled ribosomes, displacing the stalled mRNA. The ribosome then switches to translate the ORF on the tmRNA; the nascent peptide is terminated with the 'tag peptide' encoded by the tmRNA and targeted for degradation. The ribosome is freed to recommence translation, which seems to be the essential function of trans-translation. The sequence is that of SsrA-binding protein from Pseudarthrobacter chlorophenolicus (strain ATCC 700700 / DSM 12829 / CIP 107037 / JCM 12360 / KCTC 9906 / NCIMB 13794 / A6) (Arthrobacter chlorophenolicus).